A 171-amino-acid polypeptide reads, in one-letter code: Large ribosomal subunit protein bL9 (171 aa).

The protein belongs to the bacterial ribosomal protein bL9 family.

Its function is as follows. Binds to the 23S rRNA. The chain is Large ribosomal subunit protein bL9 from Rickettsia rickettsii (strain Iowa).